The sequence spans 296 residues: mRNA export factor rsm1 (296 aa).

The segment at 40 to 174 (PWSREEFLRR…VSTHLPEEMT (135 aa)) adopts a C3HC-type zinc-finger fold.

The protein localises to the cytoplasm. It is found in the nucleus. Functionally, involved in the export of mRNA from the nucleus to the cytoplasm. This Schizosaccharomyces pombe (strain 972 / ATCC 24843) (Fission yeast) protein is mRNA export factor rsm1 (rsm1).